The following is a 578-amino-acid chain: Hyaluronan synthase 1 (578 aa).

Residues 1–25 (MRQQDAPKPTPAACRCSGLARRVLT) lie on the Cytoplasmic side of the membrane. The helical transmembrane segment at 26–46 (IAFALLILGLMTWAYAAGVPL) threads the bilayer. Topologically, residues 47-52 (ASDRYG) are extracellular. The helical transmembrane segment at 53–73 (LLAFGLYGAFLSAHLVAQSLF) threads the bilayer. At 74-399 (AYLEHRRVAA…NALWWHRHHA (326 aa)) the chain is on the cytoplasmic side. Residues 400-420 (WMTYEAVVSGLFPFFVAATVL) form a helical membrane-spanning segment. Topologically, residues 421–430 (RLFYAGRPWA) are extracellular. The helical transmembrane segment at 431–451 (LLWVLLCVQGVALAKAAFAAW) threads the bilayer. Residues 452-457 (LRGCLR) are Cytoplasmic-facing. Residues 458 to 478 (MVLLSLYAPLYMCGLLPAKFL) form a helical membrane-spanning segment. The Extracellular portion of the chain corresponds to 479-497 (ALVTMNQSGWGTSGRRKLA). The helical transmembrane segment at 498 to 518 (ANYVPLLPLALWALLLLGGLV) threads the bilayer. At 519–540 (RSVAHEARADWSGPSRAAEAYH) the chain is on the cytoplasmic side. The chain crosses the membrane as a helical span at residues 541-561 (LAAGAGAYVGYWVAMLTLYWV). At 562–578 (GVRRLCRRRTGGYRVQV) the chain is on the extracellular side.

The protein belongs to the NodC/HAS family. Mg(2+) is required as a cofactor. In terms of tissue distribution, widely expressed. Highly expressed in ovary followed by spleen, thymus, prostate, testes and large intestine. Weakly expressed in small intestine.

The protein resides in the membrane. It carries out the reaction [hyaluronan](n) + UDP-N-acetyl-alpha-D-glucosamine = N-acetyl-beta-D-glucosaminyl-(1-&gt;4)-[hyaluronan](n) + UDP + H(+). It catalyses the reaction N-acetyl-beta-D-glucosaminyl-(1-&gt;4)-[hyaluronan](n) + UDP-alpha-D-glucuronate = [hyaluronan](n+1) + UDP + H(+). The protein operates within glycan biosynthesis; hyaluronan biosynthesis. Functionally, catalyzes the addition of GlcNAc or GlcUA monosaccharides to the nascent hyaluronan polymer. Therefore, it is essential to hyaluronan synthesis a major component of most extracellular matrices that has a structural role in tissues architectures and regulates cell adhesion, migration and differentiation. This is one of the isozymes catalyzing that reaction. Also able to catalyze the synthesis of chito-oligosaccharide depending on the substrate. The protein is Hyaluronan synthase 1 (HAS1) of Homo sapiens (Human).